Reading from the N-terminus, the 176-residue chain is HTH-type transcriptional regulator DctR (176 aa).

The HTH luxR-type domain maps to 109 to 174; sequence VPEANVSLSR…ELVRHQHIDY (66 aa). The H-T-H motif DNA-binding region spans 133 to 152; the sequence is TEDILEKLKISLKTFYCHKH.

May act as a transcriptional regulator of dctA. Could be involved in the regulation of the genes coding for the type III secretion system in enterohaemorragic strains. This is HTH-type transcriptional regulator DctR (dctR) from Escherichia coli O157:H7.